Here is an 87-residue protein sequence, read N- to C-terminus: Small ribosomal subunit protein bS20 (87 aa).

This sequence belongs to the bacterial ribosomal protein bS20 family.

Binds directly to 16S ribosomal RNA. The chain is Small ribosomal subunit protein bS20 from Corynebacterium urealyticum (strain ATCC 43042 / DSM 7109).